The following is a 394-amino-acid chain: Elongation factor Tu 1 (394 aa).

A tr-type G domain is found at 10–204 (KPHVNVGTIG…HLDTYIPEPE (195 aa)). The tract at residues 19 to 26 (GHVDHGKT) is G1. 19–26 (GHVDHGKT) contributes to the GTP binding site. Thr26 is a Mg(2+) binding site. The G2 stretch occupies residues 60–64 (GITIN). Residues 81–84 (DCPG) form a G3 region. GTP contacts are provided by residues 81–85 (DCPGH) and 136–139 (NKCD). The segment at 136-139 (NKCD) is G4. The interval 174–176 (SAL) is G5.

It belongs to the TRAFAC class translation factor GTPase superfamily. Classic translation factor GTPase family. EF-Tu/EF-1A subfamily. In terms of assembly, monomer.

Its subcellular location is the cytoplasm. It catalyses the reaction GTP + H2O = GDP + phosphate + H(+). Its function is as follows. GTP hydrolase that promotes the GTP-dependent binding of aminoacyl-tRNA to the A-site of ribosomes during protein biosynthesis. The sequence is that of Elongation factor Tu 1 from Haemophilus influenzae (strain 86-028NP).